The following is a 102-amino-acid chain: Large ribosomal subunit protein bL21 (102 aa).

This sequence belongs to the bacterial ribosomal protein bL21 family. As to quaternary structure, part of the 50S ribosomal subunit. Contacts protein L20.

This protein binds to 23S rRNA in the presence of protein L20. The polypeptide is Large ribosomal subunit protein bL21 (Nitratidesulfovibrio vulgaris (strain ATCC 29579 / DSM 644 / CCUG 34227 / NCIMB 8303 / VKM B-1760 / Hildenborough) (Desulfovibrio vulgaris)).